The chain runs to 149 residues: D-aminoacyl-tRNA deacylase (149 aa).

Positions 137-138 (GP) match the Gly-cisPro motif, important for rejection of L-amino acids motif.

Belongs to the DTD family. As to quaternary structure, homodimer.

The protein localises to the cytoplasm. It catalyses the reaction glycyl-tRNA(Ala) + H2O = tRNA(Ala) + glycine + H(+). The catalysed reaction is a D-aminoacyl-tRNA + H2O = a tRNA + a D-alpha-amino acid + H(+). Its function is as follows. An aminoacyl-tRNA editing enzyme that deacylates mischarged D-aminoacyl-tRNAs. Also deacylates mischarged glycyl-tRNA(Ala), protecting cells against glycine mischarging by AlaRS. Acts via tRNA-based rather than protein-based catalysis; rejects L-amino acids rather than detecting D-amino acids in the active site. By recycling D-aminoacyl-tRNA to D-amino acids and free tRNA molecules, this enzyme counteracts the toxicity associated with the formation of D-aminoacyl-tRNA entities in vivo and helps enforce protein L-homochirality. In Clostridium botulinum (strain Alaska E43 / Type E3), this protein is D-aminoacyl-tRNA deacylase.